Consider the following 597-residue polypeptide: Aspartate--tRNA ligase (597 aa).

Position 180 (Glu180) interacts with L-aspartate. The aspartate stretch occupies residues 204–207 (QLFK). Arg226 serves as a coordination point for L-aspartate. ATP-binding positions include 226-228 (RDE) and Gln235. His454 serves as a coordination point for L-aspartate. Glu488 lines the ATP pocket. Residue Arg495 participates in L-aspartate binding. Residue 540–543 (GLDR) coordinates ATP.

It belongs to the class-II aminoacyl-tRNA synthetase family. Type 1 subfamily. Homodimer.

It localises to the cytoplasm. The enzyme catalyses tRNA(Asp) + L-aspartate + ATP = L-aspartyl-tRNA(Asp) + AMP + diphosphate. Its function is as follows. Catalyzes the attachment of L-aspartate to tRNA(Asp) in a two-step reaction: L-aspartate is first activated by ATP to form Asp-AMP and then transferred to the acceptor end of tRNA(Asp). The protein is Aspartate--tRNA ligase of Clostridium perfringens (strain SM101 / Type A).